Here is a 698-residue protein sequence, read N- to C-terminus: MSPHNTCTLQITRALLSRLHILFHSALVASVFYYRFSNFSSGPAWALMTFAELTLAFIWALTQAFRWRPVVRAVFGPEEIDPAQLPGLDVFICTADPRKEPVMEVMNSVVSALALDYPAEKLAVYLSDDGGSPLTREVIREAAVFGKYWVGFCGKYNVKTRCPEAYFSSFCDGERVDHNQDYLNDELSVKSKFEAFKKYVQKASEDATKCIVVNDRPSCVEIIHDSKQNGEGEVKMPLLVYVAREKRPGFNHHAKAGAINTLLRVSGLLSNSPFFLVLDCDMYCNDPTSARQAMCFHLDPKLAPSLAFVQYPQIFYNTSKNDIYDGQARAAFKTKYQGMDGLRGPVMSGTGYFLKRKALYGKPHDQDELLREQPTKAFGSSKIFIASLGENTCVALKGLSKDELLQETQKLAACTYESNTLWGSEVGYSYDCLLESTYCGYLLHCKGWISVYLYPKKPCFLGCATVDMNDAMLQIMKWTSGLIGVGISKFSPFTYAMSRISIMQSLCYAYFAFSGLFAVFFLIYGVVLPYSLLQGVPLFPKAGDPWLLAFAGVFISSLLQHLYEVLSSGETVKAWWNEQRIWIIKSITACLFGLLDAMLNKIGVLKASFRLTNKAVDKQKLDKYEKGRFDFQGAQMFMVPLMILVVFNLVSFFGGLRRTVIHKNYEDMFAQLFLSLFILALSYPIMEEIVRKARKGRS.

Residues 14–34 (ALLSRLHILFHSALVASVFYY) traverse the membrane as a helical segment. N-linked (GlcNAc...) asparagine glycosylation is present at N38. A helical transmembrane segment spans residues 42-62 (GPAWALMTFAELTLAFIWALT). UDP-alpha-D-glucose-binding residues include K99 and E100. The active site involves D129. Residue N317 is glycosylated (N-linked (GlcNAc...) asparagine). S436 is a catalytic residue. 6 helical membrane passes run 478–498 (WTSGLIGVGISKFSPFTYAMS), 508–528 (YAYFAFSGLFAVFFLIYGVVL), 546–566 (WLLAFAGVFISSLLQHLYEVL), 581–601 (IWIIKSITACLFGLLDAMLNK), 636–656 (MFMVPLMILVVFNLVSFFGGL), and 669–689 (FAQLFLSLFILALSYPIMEEI).

This sequence belongs to the glycosyltransferase 2 family. Plant cellulose synthase-like G subfamily. As to expression, mainly expressed in flowers and flower buds and, to a lesser extent, in leaves, stems and roots.

It localises to the golgi apparatus membrane. Its pathway is secondary metabolite biosynthesis; terpenoid biosynthesis. Functionally, component of the oleanane-type triterpene saponins (e.g. saponarioside A and saponarioside B) biosynthetic pathway, leading to the production of natural products with detergent properties used as traditional sources of soap. Glycosyltransferase that mediates the conversion of quillaic acid (QA) to QA-mono via the initiation of the C-3 sugar chain. The protein is Quillaic acid 3-O-glycosyltransferase CSL1 of Saponaria officinalis (Common soapwort).